We begin with the raw amino-acid sequence, 836 residues long: Enhancer of polycomb homolog 1 (836 aa).

K319 is covalently cross-linked (Glycyl lysine isopeptide (Lys-Gly) (interchain with G-Cter in SUMO2)). Disordered stretches follow at residues 335–360 (KRKY…SPAA) and 372–401 (YDFP…PDGP). A compositionally biased stretch (low complexity) spans 346–360 (PSSAAATPQQTSPAA). S539 carries the post-translational modification Phosphoserine. K673 is covalently cross-linked (Glycyl lysine isopeptide (Lys-Gly) (interchain with G-Cter in SUMO2)). A disordered region spans residues 802 to 829 (VPSSSSVDSVPRENHESEKPALNNIADN). The segment covering 811–820 (VPRENHESEK) has biased composition (basic and acidic residues).

The protein belongs to the enhancer of polycomb family. As to quaternary structure, component of the NuA4 histone acetyltransferase complex which contains the catalytic subunit KAT5/TIP60 and the subunits EP400, TRRAP/PAF400, BRD8/SMAP, EPC1, DMAP1/DNMAP1, RUVBL1/TIP49, RUVBL2, ING3, actin, ACTL6A/BAF53A, MORF4L1/MRG15, MORF4L2/MRGX, MRGBP, YEATS4/GAS41, VPS72/YL1 and MEAF6. KAT5/TIP60, EPC1, and ING3 together constitute a minimal HAT complex termed Piccolo NuA4. Component of a NuA4-related complex which contains EP400, TRRAP/PAF400, SRCAP, BRD8/SMAP, EPC1, DMAP1/DNMAP1, RUVBL1/TIP49, RUVBL2, actin, ACTL6A/BAF53A, VPS72 and YEATS4/GAS41. Interacts with TRIM27. Interacts with MBTD1; interaction is direct and promotes recruitment of MBTD1 into the NuA4 histone acetyltransferase complex.

It is found in the nucleus. Its subcellular location is the cytoplasm. Functionally, component of the NuA4 histone acetyltransferase (HAT) complex, a multiprotein complex involved in transcriptional activation of select genes principally by acetylation of nucleosomal histones H4 and H2A. The NuA4 complex plays a direct role in repair of DNA double-strand breaks (DSBs) by promoting homologous recombination (HR). The NuA4 complex is also required for spermatid development by promoting acetylation of histones: histone acetylation is required for histone replacement during the transition from round to elongating spermatids. In the NuA4 complex, EPC1 is required to recruit MBTD1 into the complex. The sequence is that of Enhancer of polycomb homolog 1 from Homo sapiens (Human).